Here is a 168-residue protein sequence, read N- to C-terminus: Putative flavin-containing monooxygenase FMO GS-OX-like 11 (168 aa).

17-22 (GAGAAG) lines the FAD pocket.

The protein belongs to the FMO family. It depends on FAD as a cofactor.

Catalyzes the conversion of methylthioalkyl glucosinolates of any chain length into methylsulfinylalkyl glucosinolates. The protein is Putative flavin-containing monooxygenase FMO GS-OX-like 11 of Arabidopsis thaliana (Mouse-ear cress).